We begin with the raw amino-acid sequence, 190 residues long: Prostaglandin-H2 D-isomerase (190 aa).

A signal peptide spans 1 to 22; the sequence is MATHHTLWMGLALLGVLGDLQA. O-linked (GalNAc...) serine glycosylation is present at S29. N51 carries an N-linked (GlcNAc...) (complex) asparagine glycan. C65 serves as the catalytic Nucleophile. Residue N78 is glycosylated (N-linked (GlcNAc...) (complex) asparagine). A disulfide bridge links C89 with C186.

This sequence belongs to the calycin superfamily. Lipocalin family. In terms of assembly, monomer. Post-translationally, N- and O-glycosylated. Both N-glycosylation recognition sites are almost quantitatively occupied by N-glycans of the biantennary complex type, with a considerable proportion of structures bearing a bisecting GlcNAc. N-glycan at Asn-78: dHex1Hex5HexNAc4. Agalacto structure as well as sialylated and nonsialylated oligosaccharides bearing alpha2-3- and/or alpha2-6-linked NeuNAc are present. Abundant in the brain and CNS, where it is expressed in tissues of the blood-brain barrier and secreted into the cerebro-spinal fluid. Abundantly expressed in the heart. In the male reproductive system, it is expressed in the testis, epididymis and prostate, and is secreted into the seminal fluid. Expressed in the eye and secreted into the aqueous humor. Lower levels detected in various tissue fluids such as serum, normal urine, ascitic fluid and tear fluid. Also found in a number of other organs including ovary, fimbriae of the fallopian tubes, kidney, leukocytes.

It is found in the rough endoplasmic reticulum. Its subcellular location is the nucleus membrane. It localises to the golgi apparatus. The protein localises to the cytoplasm. The protein resides in the perinuclear region. It is found in the secreted. The enzyme catalyses prostaglandin H2 = prostaglandin D2. Its function is as follows. Catalyzes the conversion of PGH2 to PGD2, a prostaglandin involved in smooth muscle contraction/relaxation and a potent inhibitor of platelet aggregation. Involved in a variety of CNS functions, such as sedation, NREM sleep and PGE2-induced allodynia, and may have an anti-apoptotic role in oligodendrocytes. Binds small non-substrate lipophilic molecules, including biliverdin, bilirubin, retinal, retinoic acid and thyroid hormone, and may act as a scavenger for harmful hydrophobic molecules and as a secretory retinoid and thyroid hormone transporter. Possibly involved in development and maintenance of the blood-brain, blood-retina, blood-aqueous humor and blood-testis barrier. It is likely to play important roles in both maturation and maintenance of the central nervous system and male reproductive system. Involved in PLA2G3-dependent maturation of mast cells. PLA2G3 is secreted by immature mast cells and acts on nearby fibroblasts upstream to PTDGS to synthesize PGD2, which in turn promotes mast cell maturation and degranulation via PTGDR. The chain is Prostaglandin-H2 D-isomerase (PTGDS) from Homo sapiens (Human).